A 472-amino-acid chain; its full sequence is UDP-N-acetylmuramate--L-alanine ligase (472 aa).

118-124 is a binding site for ATP; sequence GTHGKTT.

This sequence belongs to the MurCDEF family.

The protein localises to the cytoplasm. It catalyses the reaction UDP-N-acetyl-alpha-D-muramate + L-alanine + ATP = UDP-N-acetyl-alpha-D-muramoyl-L-alanine + ADP + phosphate + H(+). It functions in the pathway cell wall biogenesis; peptidoglycan biosynthesis. Its function is as follows. Cell wall formation. The sequence is that of UDP-N-acetylmuramate--L-alanine ligase from Methylococcus capsulatus (strain ATCC 33009 / NCIMB 11132 / Bath).